The primary structure comprises 364 residues: MRTIDSSSKKDGFRMPGEFEKHAGCYIIWPERPDNWRLGAKPAQKAFVDVATAISRFEPVTVVASSSQYVNARYMLPDEIRVVEMDNDDAWVRDSGPTFVVNDSGDVRGVDWSFNSWGGLVDGLYFPWDKDDQVAQKICELERKDRYRLADFVLEGGSIHVDGEGTLVTTEECLLSEGRNPQLSKQQIEMVLKEYLNLEKIIWLKRGIYLDETNGHVDNIFNYVRPGVVALAWTDDETDPQYEISKECFDILSNETDAKGRKLEVHKINVPKPILITDEESKGVDAVEGTLPREEGDRLAASYINYYTANGGVVFPLFGDPNDELAREKLRQLYPNCEVVGVKAREILLGGGNIHCITQQVPRG.

The active-site Amidino-cysteine intermediate is Cys356.

It belongs to the agmatine deiminase family.

The catalysed reaction is agmatine + H2O = N-carbamoylputrescine + NH4(+). The sequence is that of Putative agmatine deiminase 1 from Listeria monocytogenes serotype 4b (strain F2365).